We begin with the raw amino-acid sequence, 335 residues long: MAFQDPTYDQNKSRHINNSHLQGPNQETIEMKSKHVSFKPSRDFHTNDYSNNYIHGKSLPQQHVTNIENRVDGYPKLQKLFQAKAKQINQFATTPFGCKIGIDSIVPTLNHWIQNENLTFDVVMIGCLTENQFIYPILTQLPLDRLISKPGFLFIWANSQKINELTKLLNNEIWAKKFRRSEELVFVPIDKKSPFYPGLDQDDETLMEKMQWHCWMCITGTVRRSTDGHLIHCNVDTDLSIETKDTTNGAVPSHLYRIAENFSTATRRLHIIPARTGYETPVKVRPGWVIVSPDVMLDNFSPKRYKEEIANLGSNIPLKNEIELLRPRSPVQKAQ.

The segment at 1-25 is disordered; that stretch reads MAFQDPTYDQNKSRHINNSHLQGPN. The span at 16 to 25 shows a compositional bias: polar residues; the sequence is INNSHLQGPN.

The protein belongs to the MT-A70-like family. As to quaternary structure, component of the MIS (mRNA N6-methyladenosine (m6A) methylation) complex, at least composed of IME4, KAR4, MUM2, SLZ1, and VIR1. Interacts with VIR1.

It localises to the nucleus. The protein resides in the cytoplasm. Functionally, component of the MIS complex, a complex that mediates N6-methyladenosine (m6A) methylation of meiotic mRNAs and is required for initiation of meiosis, progression through the meiotic divisions and sporulation. May assist STE12 in the pheromone-dependent expression of KAR3 and CIK1. The chain is Karyogamy protein KAR4 (KAR4) from Saccharomyces cerevisiae (strain ATCC 204508 / S288c) (Baker's yeast).